A 153-amino-acid chain; its full sequence is UPAR/Ly6 domain-containing protein cold (153 aa).

The N-terminal stretch at 1–25 (MKSWEIAVVLVAAVYLCSQVNFVAG) is a signal peptide. The Extracellular segment spans residues 26 to 130 (LECYVCSNQT…FVISGAPSRQ (105 aa)). Cystine bridges form between Cys-28/Cys-55, Cys-31/Cys-41, Cys-48/Cys-81, Cys-87/Cys-112, Cys-99/Cys-109, and Cys-113/Cys-118. Asn-33 carries an N-linked (GlcNAc...) asparagine glycan. The GPI-anchor amidated serine moiety is linked to residue Ser-124. Residues 125 to 153 (GAPSRQGYGVCLTLLTALLGLGSWLIPRS) constitute a propeptide, removed in mature form. Residues 131–151 (GYGVCLTLLTALLGLGSWLIP) traverse the membrane as a helical segment. The Cytoplasmic portion of the chain corresponds to 152–153 (RS).

The protein belongs to the snake toxin-like superfamily. GPI-anchored. In terms of tissue distribution, expressed in all tissues that form septate junctions, including hindgut, trachea, epidermis and dorsal pouch. Expressed in subperineurial glial cells that form the hemolymph-brain barrier of the central nervous system.

The protein localises to the endosome membrane. It is found in the endoplasmic reticulum membrane. The protein resides in the cell membrane. It localises to the cell junction. Its subcellular location is the septate junction. Functionally, required for septate junction assembly, possibly by organizing the preassembly and transport of septate junction proteins such as dlg1/disks large 1 and Nrx-IV/Neurexin-IV. Involved in paracellular barrier functions of trachea, hindgut and salivary gland mediated by epithelial cell septate junctions. Involved in paracellular barrier functions of the hemolymph-brain barrier (insect blood-brain barrier) mediated by glial cell septate junctions. Required for maintenance of septate junctions in imaginal disk epithelial cells. Involved in the epithelial cell wound-healing response. Directly or indirectly mediates cell-cell adhesion during septate junction formation. The polypeptide is UPAR/Ly6 domain-containing protein cold (Drosophila melanogaster (Fruit fly)).